The chain runs to 249 residues: Hydantoin racemase (249 aa).

This sequence belongs to the HyuE racemase family. Homohexamer.

It catalyses the reaction a D-5-monosubstituted hydantoin = a L-5-monosubstituted hydantoin. The enzyme catalyses D-5-[2-(methylsulfanyl)ethyl]hydantoin = L-5-[2-(methysulfanyl)ethyl]hydantoin. The catalysed reaction is D-5-benzylhydantoin = L-5-benzylhydantoin. It carries out the reaction D-5-isopropylhydantoin = L-5-isopropylhydantoin. It catalyses the reaction D-5-isobutylhydantoin = L-5-isobutylhydantoin. Its activity is regulated as follows. Strongly inhibited by Cu(2+) and Zn(2+). Slightly stimulated by the addition of Mn(2+) or Co(2+), but also by metal-chelating agents such as EDTA or EGTA, indicating that the enzyme is not a metalloenzyme. Functionally, involved in the asymmetric conversion of racemic 5-substituted hydantoins to the corresponding L-amino acids. Catalyzes the racemization via enolization of D- and L-5-monosubstituted hydantoins. Is able to racemize 5-substituted hydantoins having aromatic or aliphatic substituents such as 5-(2-methylthioethyl)hydantoin, 5-isopropylhydantoin, 5-isobutylhydantoin and 5-benzylhydantoin. The protein is Hydantoin racemase of Pseudomonas sp. (strain NS671).